Consider the following 384-residue polypeptide: Sphingosine 1-phosphate receptor 4 (384 aa).

Over 1–50 (MNATGTPVAPESCQQLAAGGHSRLIVLHYNHSGRLAGRGGPEDGGLGALR) the chain is Extracellular. Asn-2 and Asn-30 each carry an N-linked (GlcNAc...) asparagine glycan. A helical membrane pass occupies residues 51–71 (GLSVAASCLVVLENLLVLAAI). Residues 72 to 84 (TSHMRSRRWVYYC) are Cytoplasmic-facing. Residues 85–105 (LVNITLSDLLTGAAYLANVLL) traverse the membrane as a helical segment. The Extracellular segment spans residues 106–117 (SGARTFRLAPAQ). Residues 118–138 (WFLREGLLFTALAASTFSLLF) form a helical membrane-spanning segment. Over 139–161 (TAGERFATMVRPVAESGATKTSR) the chain is Cytoplasmic. Residues 162–182 (VYGFIGLCWLLAALLGMLPLL) traverse the membrane as a helical segment. The Extracellular segment spans residues 183-206 (GWNCLCAFDRCSSLLPLYSKRYIL). A helical membrane pass occupies residues 207–227 (FCLVIFAGVLATIMGLYGAIF). Over 228–252 (RLVQASGQKAPRPAARRKARRLLKT) the chain is Cytoplasmic. A helical membrane pass occupies residues 253–273 (VLMILLAFLVCWGPLFGLLLA). Residues 274–288 (DVFGSNLWAQEYLRG) are Extracellular-facing. The chain crosses the membrane as a helical span at residues 289-309 (MDWILALAVLNSAVNPIIYSF). Topologically, residues 310–384 (RSREVCRAVL…LSSISSVRSI (75 aa)) are cytoplasmic. Cys-323 is lipidated: S-palmitoyl cysteine.

The protein belongs to the G-protein coupled receptor 1 family. In terms of tissue distribution, specifically expressed in fetal and adult lymphoid and hematopoietic tissue as well as in lung. Considerable level of expression in adult and fetal spleen as well as adult peripheral leukocytes and lung. Lower expression in adult thymus, lymph node, bone marrow, and appendix as well as in fetal liver, thymus, and lung.

The protein resides in the cell membrane. Receptor for the lysosphingolipid sphingosine 1-phosphate (S1P). S1P is a bioactive lysophospholipid that elicits diverse physiological effect on most types of cells and tissues. May be involved in cell migration processes that are specific for lymphocytes. This chain is Sphingosine 1-phosphate receptor 4 (S1PR4), found in Homo sapiens (Human).